A 113-amino-acid polypeptide reads, in one-letter code: Putative pterin-4-alpha-carbinolamine dehydratase (113 aa).

Belongs to the pterin-4-alpha-carbinolamine dehydratase family.

It catalyses the reaction (4aS,6R)-4a-hydroxy-L-erythro-5,6,7,8-tetrahydrobiopterin = (6R)-L-erythro-6,7-dihydrobiopterin + H2O. The polypeptide is Putative pterin-4-alpha-carbinolamine dehydratase (Hydrogenovibrio crunogenus (strain DSM 25203 / XCL-2) (Thiomicrospira crunogena)).